Consider the following 128-residue polypeptide: Large ribosomal subunit protein bL12 (128 aa).

The protein belongs to the bacterial ribosomal protein bL12 family. Homodimer. Part of the ribosomal stalk of the 50S ribosomal subunit. Forms a multimeric L10(L12)X complex, where L10 forms an elongated spine to which 2 to 4 L12 dimers bind in a sequential fashion. Binds GTP-bound translation factors.

In terms of biological role, forms part of the ribosomal stalk which helps the ribosome interact with GTP-bound translation factors. Is thus essential for accurate translation. The protein is Large ribosomal subunit protein bL12 of Saccharopolyspora erythraea (strain ATCC 11635 / DSM 40517 / JCM 4748 / NBRC 13426 / NCIMB 8594 / NRRL 2338).